The following is a 686-amino-acid chain: Amphiphysin (686 aa).

2 coiled-coil regions span residues 10–83 (AKNV…SLHE) and 144–191 (DYDS…QEEL). The region spanning 24–240 (VLQKLGKADE…MTKLGDQHAD (217 aa)) is the BAR domain. 3 disordered regions span residues 244 to 314 (SIQG…PTKE), 421 to 441 (AETE…ATAA), and 483 to 597 (VEEA…AGAV). The residue at position 252 (Ser252) is a Phosphoserine. The residue at position 260 (Thr260) is a Phosphothreonine. Residues 261 to 274 (PSPPEEPSPLPSPT) show a composition bias toward pro residues. A phosphoserine mark is found at Ser262, Ser268, Ser272, and Ser276. At Thr280 the chain carries Phosphothreonine. Low complexity predominate over residues 424–441 (EQALPTEPQAEEPPATAA). Phosphoserine is present on Ser500. A compositionally biased stretch (basic and acidic residues) spans 541 to 562 (SNHEGEGEHQETATGTEPREAA). An SH3 domain is found at 613–686 (GFLYKVETLH…FPENFTRRLE (74 aa)). Position 629 is a phosphoserine (Ser629).

Heterodimer with BIN1. Binds SH3GLB1. Interacts with REPS1 and SGIP1. Binds AP2A2. Interacts with AP2B1. Interacts with DNM1 and SYNJ1.

The protein resides in the cytoplasmic vesicle. It is found in the secretory vesicle. Its subcellular location is the synaptic vesicle membrane. It localises to the cytoplasm. The protein localises to the cytoskeleton. In terms of biological role, may participate in mechanisms of regulated exocytosis in synapses and certain endocrine cell types. May control the properties of the membrane associated cytoskeleton. This chain is Amphiphysin (Amph), found in Mus musculus (Mouse).